The primary structure comprises 168 residues: Large ribosomal subunit protein uL24 (168 aa).

The disordered stretch occupies residues 112-168; that stretch reads LEGKDPRKQPKEAPKAAEKPAKEEPKKETPKAEEKPAKEEPKETKVEKKSEEKEDEN.

This sequence belongs to the universal ribosomal protein uL24 family. As to quaternary structure, part of the 50S ribosomal subunit.

Its function is as follows. One of two assembly initiator proteins, it binds directly to the 5'-end of the 23S rRNA, where it nucleates assembly of the 50S subunit. Functionally, located at the polypeptide exit tunnel on the outside of the subunit. The chain is Large ribosomal subunit protein uL24 from Nitrosopumilus maritimus (strain SCM1).